A 177-amino-acid polypeptide reads, in one-letter code: Large ribosomal subunit protein uL6 (177 aa).

The protein belongs to the universal ribosomal protein uL6 family. Part of the 50S ribosomal subunit.

This protein binds to the 23S rRNA, and is important in its secondary structure. It is located near the subunit interface in the base of the L7/L12 stalk, and near the tRNA binding site of the peptidyltransferase center. This is Large ribosomal subunit protein uL6 from Aromatoleum aromaticum (strain DSM 19018 / LMG 30748 / EbN1) (Azoarcus sp. (strain EbN1)).